The primary structure comprises 955 residues: RNA polymerase-associated protein RapA (955 aa).

Positions 163–333 constitute a Helicase ATP-binding domain; sequence EVGHRYAPRV…FARLRLLDPE (171 aa). 176-183 is an ATP binding site; the sequence is DEVGLGKT. The DEAH box signature appears at 279–282; it reads DEAH. A Helicase C-terminal domain is found at 478–642; that stretch reads RVEWLLELLL…AVRDELFELL (165 aa).

The protein belongs to the SNF2/RAD54 helicase family. RapA subfamily. As to quaternary structure, interacts with the RNAP. Has a higher affinity for the core RNAP than for the holoenzyme. Its ATPase activity is stimulated by binding to RNAP.

In terms of biological role, transcription regulator that activates transcription by stimulating RNA polymerase (RNAP) recycling in case of stress conditions such as supercoiled DNA or high salt concentrations. Probably acts by releasing the RNAP, when it is trapped or immobilized on tightly supercoiled DNA. Does not activate transcription on linear DNA. Probably not involved in DNA repair. In Aeromonas hydrophila subsp. hydrophila (strain ATCC 7966 / DSM 30187 / BCRC 13018 / CCUG 14551 / JCM 1027 / KCTC 2358 / NCIMB 9240 / NCTC 8049), this protein is RNA polymerase-associated protein RapA.